We begin with the raw amino-acid sequence, 148 residues long: FAD synthase (148 aa).

ATP-binding positions include 14–15 (VF), 19–22 (HVGH), and D100.

This sequence belongs to the archaeal FAD synthase family. As to quaternary structure, homodimer. A divalent metal cation serves as cofactor.

The catalysed reaction is FMN + ATP + H(+) = FAD + diphosphate. Its pathway is cofactor biosynthesis; FAD biosynthesis; FAD from FMN: step 1/1. Its function is as follows. Catalyzes the transfer of the AMP portion of ATP to flavin mononucleotide (FMN) to produce flavin adenine dinucleotide (FAD) coenzyme. This Thermococcus sibiricus (strain DSM 12597 / MM 739) protein is FAD synthase.